A 473-amino-acid chain; its full sequence is Cysteine--tRNA ligase (473 aa).

A Zn(2+)-binding site is contributed by Cys28. Positions 30 to 40 match the 'HIGH' region motif; sequence PTVYNMPHIGN. The Zn(2+) site is built by Cys213, His238, and Glu242. A 'KMSKS' region motif is present at residues 270–274; sequence KMSKS. Lys273 serves as a coordination point for ATP.

The protein belongs to the class-I aminoacyl-tRNA synthetase family. Zn(2+) is required as a cofactor.

The protein resides in the cytoplasm. The enzyme catalyses tRNA(Cys) + L-cysteine + ATP = L-cysteinyl-tRNA(Cys) + AMP + diphosphate. This Methanosarcina acetivorans (strain ATCC 35395 / DSM 2834 / JCM 12185 / C2A) protein is Cysteine--tRNA ligase.